The chain runs to 192 residues: Leucine-rich repeat-containing protein 51 (192 aa).

LRR repeat units follow at residues 49–71 (SLTQ…NQVA), 80–101 (NLAW…LTTF), and 103–124 (NLSV…NKLA). In terms of domain architecture, LRRCT spans 137–175 (NPMEEEKGYRQYVLCTLSRITTFDFSGVTKADRTTAEVW).

It localises to the cytoplasm. The protein is Leucine-rich repeat-containing protein 51 of Homo sapiens (Human).